Consider the following 231-residue polypeptide: Phycobilisome rod-core linker polypeptide cpcG (231 aa).

Residues 11–191 (STQNQRVDGY…PRYGADFKEK (181 aa)) enclose the PBS-linker domain.

Belongs to the phycobilisome linker protein family. The phycobilisome is a hemidiscoidal structure that is composed of two distinct substructures: a core complex and a number of rods radiating from the core.

The protein resides in the plastid. It is found in the chloroplast. It localises to the chloroplast thylakoid membrane. Rod-core linker protein required for attachment of phycocyanin to allophycocyanin in cores of phycobilisomes. Functionally, linker polypeptides determine the state of aggregation and the location of the disk-shaped phycobiliprotein units within the phycobilisome and modulate their spectroscopic properties in order to mediate a directed and optimal energy transfer. This Porphyra purpurea (Red seaweed) protein is Phycobilisome rod-core linker polypeptide cpcG (cpcG).